We begin with the raw amino-acid sequence, 153 residues long: MRLNELSPAPGSKKDRKRVGRGDAGRGNYSGRGMKGQKARSGGATRPGFEGGQLPIYLRLPRKRGFFNPFRIEYTVVNIEQLNIFEAGTEVTPETMLAAGLIRNFVKPVKILAAGHIDRALEVSAHKFSQAAKAQIEAAGGKVQEIDYAAEIE.

Positions 1–48 are disordered; it reads MRLNELSPAPGSKKDRKRVGRGDAGRGNYSGRGMKGQKARSGGATRPG.

Belongs to the universal ribosomal protein uL15 family. As to quaternary structure, part of the 50S ribosomal subunit.

Functionally, binds to the 23S rRNA. This chain is Large ribosomal subunit protein uL15, found in Dehalococcoides mccartyi (strain ATCC BAA-2266 / KCTC 15142 / 195) (Dehalococcoides ethenogenes (strain 195)).